Consider the following 77-residue polypeptide: Putative defensin-like protein 118 (77 aa).

Residues 1 to 25 (MSKSTILAIFMIVLVLGKVTKETQG) form the signal peptide. 4 cysteine pairs are disulfide-bonded: cysteine 29/cysteine 75, cysteine 39/cysteine 58, cysteine 44/cysteine 69, and cysteine 48/cysteine 71.

This sequence belongs to the DEFL family.

Its subcellular location is the secreted. This is Putative defensin-like protein 118 (LCR52) from Arabidopsis thaliana (Mouse-ear cress).